The chain runs to 411 residues: Creatinase (411 aa).

The active site involves histidine 240.

It belongs to the peptidase M24 family. Creatinase subfamily. In terms of assembly, homodimer.

It carries out the reaction creatine + H2O = sarcosine + urea. The polypeptide is Creatinase (Bacillus sp. (strain B-0618)).